Reading from the N-terminus, the 590-residue chain is (+)-sabinene synthase, chloroplastic (590 aa).

Residues 1-51 (MSSISINIAMPLNSLHNFERKPSKAWSTSCTAPAARLRASSSLQQEKPHQI) constitute a chloroplast transit peptide. Mg(2+) is bound by residues aspartate 343, aspartate 347, aspartate 487, threonine 491, and glutamate 495. Positions 343–347 (DDVYD) match the DDXXD motif motif.

The protein belongs to the terpene synthase family. As to quaternary structure, monomer. Mg(2+) serves as cofactor.

Its subcellular location is the plastid. The protein localises to the chloroplast. It catalyses the reaction (2E)-geranyl diphosphate = (1R,5R)-sabinene + diphosphate. It participates in terpene metabolism; sabinene hydrate biosynthesis. Its function is as follows. Catalyzes the formation of the (-)-3-isothujone precursor sabinene from geranyl diphosphate. The enzyme also produces significant amounts of gamma-terpinene, terpinolene and limonene. In Salvia officinalis (Sage), this protein is (+)-sabinene synthase, chloroplastic.